The sequence spans 210 residues: Glutathione S-transferase 3 (210 aa).

Residues 1 to 80 (MDFYYLPLSA…YLVEKYGKQN (80 aa)) form the GST N-terminal domain. Glutathione-binding positions include Ser9, 50 to 52 (HTI), and 64 to 66 (ESR). Residues 87-208 (CPKKRALINQ…AGCLEMKKYF (122 aa)) form the GST C-terminal domain.

Belongs to the GST superfamily. Theta family. Homodimer.

It catalyses the reaction RX + glutathione = an S-substituted glutathione + a halide anion + H(+). Conjugation of reduced glutathione to a wide number of exogenous and endogenous hydrophobic electrophiles. The chain is Glutathione S-transferase 3 (Gst3) from Musca domestica (House fly).